A 287-amino-acid polypeptide reads, in one-letter code: MTELVGVGLGLRREFMDAFLNAETHPDFIEVAPENWMGFGGRHAKLLARCVEKAPLICHGLSLSIGGPHPLDLEFIQQVKLFLQRYQVQIYSEHLSYTHDGGYLYDLLPIPMTEAAVNYVAERILRVQDILGQRLVIENVSTYLMPNAEMPEAEFVREVLLKADCELLLDVNNVYVNSVNHDSDAYAFIDAMPKDRIRYLHVAGHEQVEKNLLIDTHGAAIRDPVWQLLQYSYQVCGVKPTLLERDFNIPSWAQLQTELSQIKIMQQQGSRNEGKANILSHNATTVL.

Belongs to the UPF0276 family.

The protein is UPF0276 protein ACIAD0933 of Acinetobacter baylyi (strain ATCC 33305 / BD413 / ADP1).